A 391-amino-acid polypeptide reads, in one-letter code: Pectate lyase D (391 aa).

Positions 1–31 (MNNTRVSFRSTKSLLAAIIATSMMTWSVNRA) are cleaved as a signal peptide. Aspartate 170 and aspartate 213 together coordinate Ca(2+). The active site involves arginine 266.

This sequence belongs to the polysaccharide lyase 1 family. PLBC subfamily. Ca(2+) is required as a cofactor.

Its subcellular location is the secreted. It catalyses the reaction Eliminative cleavage of (1-&gt;4)-alpha-D-galacturonan to give oligosaccharides with 4-deoxy-alpha-D-galact-4-enuronosyl groups at their non-reducing ends.. The protein operates within glycan metabolism; pectin degradation; 2-dehydro-3-deoxy-D-gluconate from pectin: step 2/5. Functionally, involved in maceration and soft-rotting of plant tissue. The polypeptide is Pectate lyase D (pelD) (Dickeya chrysanthemi (Pectobacterium chrysanthemi)).